Here is a 197-residue protein sequence, read N- to C-terminus: Holliday junction branch migration complex subunit RuvA (197 aa).

The segment at 1-64 is domain I; it reads MIGRISGLLL…EDAHLLFGFA (64 aa). The interval 65 to 142 is domain II; that stretch reads TEGERQAFRQ…DLGVSAIPGA (78 aa). Positions 143–153 are flexible linker; it reads AGARRPSTMGS. The segment at 153-197 is domain III; that stretch reads SDVLNALLSLGYNDREANWAVSQLSVDLSVSDGIRQALKFLSKEK.

The protein belongs to the RuvA family. In terms of assembly, homotetramer. Forms an RuvA(8)-RuvB(12)-Holliday junction (HJ) complex. HJ DNA is sandwiched between 2 RuvA tetramers; dsDNA enters through RuvA and exits via RuvB. An RuvB hexamer assembles on each DNA strand where it exits the tetramer. Each RuvB hexamer is contacted by two RuvA subunits (via domain III) on 2 adjacent RuvB subunits; this complex drives branch migration. In the full resolvosome a probable DNA-RuvA(4)-RuvB(12)-RuvC(2) complex forms which resolves the HJ.

Its subcellular location is the cytoplasm. Its function is as follows. The RuvA-RuvB-RuvC complex processes Holliday junction (HJ) DNA during genetic recombination and DNA repair, while the RuvA-RuvB complex plays an important role in the rescue of blocked DNA replication forks via replication fork reversal (RFR). RuvA specifically binds to HJ cruciform DNA, conferring on it an open structure. The RuvB hexamer acts as an ATP-dependent pump, pulling dsDNA into and through the RuvAB complex. HJ branch migration allows RuvC to scan DNA until it finds its consensus sequence, where it cleaves and resolves the cruciform DNA. The chain is Holliday junction branch migration complex subunit RuvA from Nitrosospira multiformis (strain ATCC 25196 / NCIMB 11849 / C 71).